The following is a 362-amino-acid chain: Acetylglutamate kinase (362 aa).

Residues methionine 1 to serine 11 are compositionally biased toward pro residues. Positions methionine 1–arginine 42 are disordered. Residues glycine 106–glycine 107, arginine 128, and asparagine 227 contribute to the substrate site. Positions methionine 329–proline 362 are disordered. Over residues alanine 346–glycine 355 the composition is skewed to low complexity.

This sequence belongs to the acetylglutamate kinase family. ArgB subfamily.

The protein localises to the cytoplasm. The catalysed reaction is N-acetyl-L-glutamate + ATP = N-acetyl-L-glutamyl 5-phosphate + ADP. It participates in amino-acid biosynthesis; L-arginine biosynthesis; N(2)-acetyl-L-ornithine from L-glutamate: step 2/4. Its function is as follows. Catalyzes the ATP-dependent phosphorylation of N-acetyl-L-glutamate. The polypeptide is Acetylglutamate kinase (Frankia casuarinae (strain DSM 45818 / CECT 9043 / HFP020203 / CcI3)).